The chain runs to 193 residues: Hypoxanthine/guanine phosphoribosyltransferase (193 aa).

Belongs to the purine/pyrimidine phosphoribosyltransferase family. Archaeal HPRT subfamily. As to quaternary structure, homodimer.

Its subcellular location is the cytoplasm. It carries out the reaction IMP + diphosphate = hypoxanthine + 5-phospho-alpha-D-ribose 1-diphosphate. The catalysed reaction is GMP + diphosphate = guanine + 5-phospho-alpha-D-ribose 1-diphosphate. Its pathway is purine metabolism; IMP biosynthesis via salvage pathway; IMP from hypoxanthine: step 1/1. Its function is as follows. Catalyzes a salvage reaction resulting in the formation of IMP that is energically less costly than de novo synthesis. Prefers hypoxanthine, has 66% activity with guanine while activity with adenine, xanthine, uracil, orotate, or cytosine is negligible. The polypeptide is Hypoxanthine/guanine phosphoribosyltransferase (Methanothermobacter marburgensis (strain ATCC BAA-927 / DSM 2133 / JCM 14651 / NBRC 100331 / OCM 82 / Marburg) (Methanobacterium thermoautotrophicum)).